The following is a 37-amino-acid chain: Large ribosomal subunit protein bL36 (37 aa).

Belongs to the bacterial ribosomal protein bL36 family.

In Ureaplasma urealyticum serovar 10 (strain ATCC 33699 / Western), this protein is Large ribosomal subunit protein bL36.